The following is a 260-amino-acid chain: Outer membrane protein assembly factor BamD (260 aa).

The first 19 residues, Met1–Ala19, serve as a signal peptide directing secretion. Cys20 carries the N-palmitoyl cysteine lipid modification. A lipid anchor (S-diacylglycerol cysteine) is attached at Cys20.

The protein belongs to the BamD family. As to quaternary structure, part of the Bam complex.

The protein localises to the cell outer membrane. Part of the outer membrane protein assembly complex, which is involved in assembly and insertion of beta-barrel proteins into the outer membrane. This is Outer membrane protein assembly factor BamD from Pasteurella multocida (strain Pm70).